The sequence spans 241 residues: Probable transcriptional regulatory protein SAR11_0592 (241 aa).

The segment at 1–24 is disordered; it reads MSGHSKWASIKHSKGKADKQRSKV.

Belongs to the TACO1 family.

The protein localises to the cytoplasm. The polypeptide is Probable transcriptional regulatory protein SAR11_0592 (Pelagibacter ubique (strain HTCC1062)).